A 632-amino-acid polypeptide reads, in one-letter code: Pentatricopeptide repeat-containing protein ELI1, chloroplastic (632 aa).

The transit peptide at 1–19 (MASSPLLATSLPQNQLSTT) directs the protein to the chloroplast. PPR repeat units lie at residues 94–128 (DLFL…EINP), 129–159 (NEFT…GLGI), 160–194 (DPYV…SLVS), 196–221 (TAMI…MCER), 222–256 (DIVS…GKPK), 258–292 (DEIT…RIRL), 293–323 (NVKV…TPRK), 324–354 (DIVA…MQGI), 360–395 (TDIT…GIKP), and 396–426 (KIEH…MNMD). The type E motif stretch occupies residues 431-506 (LWSSVLGSCK…EPGISTIEIE (76 aa)). The interval 497–512 (EPGISTIEIENKVHEF) is required for function in RNA editing. Positions 507 to 537 (NKVHEFRAGDREHSKSKEIYTMLRKISERIK) are type E(+) motif. The tract at residues 538-632 (SHGYVPNTNT…DGSCSCGDFW (95 aa)) is type DYW motif.

Belongs to the PPR family. PCMP-H subfamily. Requires Zn(2+) as cofactor.

It localises to the plastid. The protein localises to the chloroplast. Its function is as follows. Plays a major role in single RNA editing events in chloroplasts. Acts as a site-recognition transacting factor involved in the edition of the site 5 of ndhB1 and ndhB2 (ndhB1-5 and ndhB2-5 sites corresponding to cytidine-830), which are plastid-encoded subunits of the NADH-plastoquinone oxidoreductase. May provide the catalytic activity for editing site conversion. The chain is Pentatricopeptide repeat-containing protein ELI1, chloroplastic from Arabidopsis thaliana (Mouse-ear cress).